The following is a 235-amino-acid chain: Lipoprotein-releasing system ATP-binding protein LolD (235 aa).

The ABC transporter domain maps to 13-235 (LCCSNIIKRY…SNGMLKISTI (223 aa)). 49 to 56 (GASGSGKS) contributes to the ATP binding site.

Belongs to the ABC transporter superfamily. Lipoprotein translocase (TC 3.A.1.125) family. The complex is composed of two ATP-binding proteins (LolD) and two transmembrane proteins (LolC and LolE).

The protein localises to the cell inner membrane. In terms of biological role, part of the ABC transporter complex LolCDE involved in the translocation of mature outer membrane-directed lipoproteins, from the inner membrane to the periplasmic chaperone, LolA. Responsible for the formation of the LolA-lipoprotein complex in an ATP-dependent manner. The protein is Lipoprotein-releasing system ATP-binding protein LolD of Blochmanniella floridana.